A 555-amino-acid polypeptide reads, in one-letter code: Urocanate hydratase (555 aa).

NAD(+) contacts are provided by residues 52 to 53 (GG), Gln-130, 176 to 178 (GMG), Glu-196, Arg-201, 242 to 243 (NA), 263 to 267 (QTSAH), 273 to 274 (YL), and Tyr-322. Cys-410 is an active-site residue. Gly-492 is an NAD(+) binding site.

This sequence belongs to the urocanase family. The cofactor is NAD(+).

The protein localises to the cytoplasm. It catalyses the reaction 4-imidazolone-5-propanoate = trans-urocanate + H2O. The protein operates within amino-acid degradation; L-histidine degradation into L-glutamate; N-formimidoyl-L-glutamate from L-histidine: step 2/3. Catalyzes the conversion of urocanate to 4-imidazolone-5-propionate. The sequence is that of Urocanate hydratase from Shewanella baltica (strain OS195).